We begin with the raw amino-acid sequence, 1296 residues long: Probable serine/threonine protein kinase IREH1 (1296 aa).

Disordered stretches follow at residues 1–274 (MVFK…SESP), 457–480 (SGAG…QEQH), and 524–553 (SPAL…VGSR). Low complexity predominate over residues 10–32 (SSKKSGSSSPDSSNSPRSVGSNS). The residue at position 32 (Ser32) is a Phosphoserine. Composition is skewed to basic and acidic residues over residues 68-77 (DGLKKKDGSS), 101-112 (EVKKPPPPEVKE), and 178-208 (RKKE…RDSL). The span at 214 to 249 (PPRSLSPTLPPSGSRLQNVASSSGTGRSEMSSGRSG) shows a compositional bias: low complexity. The segment at 602 to 621 (CRICEEEVPTTHVEDHSRVC) adopts a C2H2-type; atypical zinc-finger fold. The disordered stretch occupies residues 724–750 (FGPKSDQGMTTSSASSMTPRSPIPTPR). A compositionally biased stretch (polar residues) spans 730–740 (QGMTTSSASSM). The Protein kinase domain occupies 882 to 1171 (FEIIKPISRG…AAEVKQHIFF (290 aa)). ATP is bound by residues 888–896 (ISRGAFGRV) and Lys911. Asp1005 acts as the Proton acceptor in catalysis. Ser1070 carries the post-translational modification Phosphoserine. Residues 1172–1277 (KDINWDTLAR…KNLSQLASIN (106 aa)) enclose the AGC-kinase C-terminal domain. The segment at 1214–1245 (PSGEVPDYSDADSMTNSSGCSSNHHEEGEAEE) is disordered. Positions 1225-1235 (DSMTNSSGCSS) are enriched in polar residues. Over residues 1236 to 1245 (NHHEEGEAEE) the composition is skewed to basic and acidic residues.

It belongs to the protein kinase superfamily. AGC Ser/Thr protein kinase family.

It catalyses the reaction L-seryl-[protein] + ATP = O-phospho-L-seryl-[protein] + ADP + H(+). The enzyme catalyses L-threonyl-[protein] + ATP = O-phospho-L-threonyl-[protein] + ADP + H(+). May be involved in root hair elongation. The polypeptide is Probable serine/threonine protein kinase IREH1 (Arabidopsis thaliana (Mouse-ear cress)).